A 474-amino-acid polypeptide reads, in one-letter code: Mercuric reductase (474 aa).

A19, G39, and T44 together coordinate FAD. C45 and C50 are oxidised to a cystine. Residues K54, A119, D315, and V323 each coordinate FAD. C471 and C472 together coordinate Hg(2+).

Belongs to the class-I pyridine nucleotide-disulfide oxidoreductase family. As to quaternary structure, homodimer. Requires FAD as cofactor.

The catalysed reaction is Hg + NADP(+) + H(+) = Hg(2+) + NADPH. Its function is as follows. Resistance to Hg(2+) in bacteria appears to be governed by a specialized system which includes mercuric reductase. MerA protein is responsible for volatilizing mercury as Hg(0). In Streptomyces lividans, this protein is Mercuric reductase (merA).